Here is a 485-residue protein sequence, read N- to C-terminus: ATP synthase subunit beta (485 aa).

Residues 1–20 (MSTTKTTKMTVKTGSKGTSG) form a disordered region. 170–177 (GGAGVGKT) serves as a coordination point for ATP.

It belongs to the ATPase alpha/beta chains family. F-type ATPases have 2 components, CF(1) - the catalytic core - and CF(0) - the membrane proton channel. CF(1) has five subunits: alpha(3), beta(3), gamma(1), delta(1), epsilon(1). CF(0) has three main subunits: a(1), b(2) and c(9-12). The alpha and beta chains form an alternating ring which encloses part of the gamma chain. CF(1) is attached to CF(0) by a central stalk formed by the gamma and epsilon chains, while a peripheral stalk is formed by the delta and b chains.

It is found in the cell membrane. The enzyme catalyses ATP + H2O + 4 H(+)(in) = ADP + phosphate + 5 H(+)(out). In terms of biological role, produces ATP from ADP in the presence of a proton gradient across the membrane. The catalytic sites are hosted primarily by the beta subunits. This is ATP synthase subunit beta from Mycobacterium leprae (strain TN).